The chain runs to 120 residues: Large ribosomal subunit protein bL17 (120 aa).

This sequence belongs to the bacterial ribosomal protein bL17 family. In terms of assembly, part of the 50S ribosomal subunit. Contacts protein L32.

The protein is Large ribosomal subunit protein bL17 of Mesomycoplasma hyopneumoniae (strain 232) (Mycoplasma hyopneumoniae).